A 162-amino-acid chain; its full sequence is Disulfide bond formation protein B (162 aa).

Residues 1-4 (MRII) are Cytoplasmic-facing. Residues 5-21 (FLLIFLACAGLIGYALY) form a helical membrane-spanning segment. Residues 22 to 39 (LQLMDGLLPCPLCIFQRI) are Periplasmic-facing. A disulfide bond links Cys-31 and Cys-34. A helical membrane pass occupies residues 40–56 (AYWLIGITALFTFIHNP). Residues 57–62 (QSLGQH) are Cytoplasmic-facing. The chain crosses the membrane as a helical span at residues 63-80 (IYYGLIILFSLAGAIVAG). Residues 81–136 (RQAWLIRFPEAFECGISPEEAFLNGLPLAQWWPNMFEANGDCNDGTWQFLSLTLPD) are Periplasmic-facing. Cys-94 and Cys-122 are joined by a disulfide. The chain crosses the membrane as a helical span at residues 137–155 (WSLLIFAAFGIIAGLLWHK). Over 156-162 (KYNSINQ) the chain is Cytoplasmic.

This sequence belongs to the DsbB family.

It is found in the cell inner membrane. Required for disulfide bond formation in some periplasmic proteins. Acts by oxidizing the DsbA protein. In Nitrosomonas eutropha (strain DSM 101675 / C91 / Nm57), this protein is Disulfide bond formation protein B.